Here is a 750-residue protein sequence, read N- to C-terminus: (13E)-labda-7,13-dien-15-ol synthase (750 aa).

Positions 284, 286, 501, 505, 647, 651, and 655 each coordinate Mg(2+). A DXDD motif motif is present at residues 284–287; that stretch reads DIDD. Residues 501 to 505 carry the DDXXD motif motif; the sequence is DDLAD.

This sequence belongs to the terpene synthase family. Requires Mg(2+) as cofactor.

The catalysed reaction is geranylgeranyl diphosphate + H2O = (13E)-labda-7,13-dien-15-ol + diphosphate. It participates in secondary metabolite biosynthesis; terpenoid biosynthesis. Functionally, bifunctional diterpene synthase that directly generates the endocyclic double bond, as well as the hydroxyl group: produces an endocyclic double bond isomer of copalyl diphosphate (CPP), and carries out subsequent replacement of the diphosphate by a hydroxyl group to form (13E)-labda-7,13-dien-15-ol. The sequence is that of (13E)-labda-7,13-dien-15-ol synthase from Selaginella moellendorffii (Spikemoss).